The following is a 162-amino-acid chain: Large ribosomal subunit protein uL15 (162 aa).

Positions 1–13 are enriched in basic and acidic residues; it reads MNLNELRDNEGSR. The disordered stretch occupies residues 1 to 39; that stretch reads MNLNELRDNEGSRYRKKRLGRGIGSGKGKTSGRGVKGQK. A compositionally biased stretch (gly residues) spans 21-35; sequence RGIGSGKGKTSGRGV.

The protein belongs to the universal ribosomal protein uL15 family. Part of the 50S ribosomal subunit.

Binds to the 23S rRNA. This is Large ribosomal subunit protein uL15 from Gluconobacter oxydans (strain 621H) (Gluconobacter suboxydans).